A 439-amino-acid chain; its full sequence is MSTTSSHSNVVGVHYRVGKKIGEGSFGMLFQGVNLINNQPIALKFESRKSEVPQLRDEYLTYKLLMGLPGIPSVYYYGQEGMYNLLVMDLLGPSLEDLFDYCGRRFSPKTVAMIAKQMITRIQSVHERHFIYRDIKPDNFLIGFPGSKTENVIYAVDFGMAKQYRDPKTHVHRPYNEHKSLSGTARYMSINTHLGREQSRRDDLESMGHVFMYFLRGSLPWQGLKAATNKQKYEKIGEKKQVTPLKELCEGYPKEFLQYMIYARNLGYEEAPDYDYLRSLFDSLLLRINETDDGKYDWTLLNNGKGWQYSAAKQHVVQRRHTQGTNNRRQSTIPPYARTRQNLLSSPSKQTPVNNVVDASVATQKDGIPGKAASPQVQQQQQTSSAQQQQPQRVEQPAPQTTQPTQVDTQQAAKPAPSKEKSRKKFHLRLLSCCISKQE.

Residues 15 to 286 form the Protein kinase domain; the sequence is YRVGKKIGEG…LRSLFDSLLL (272 aa). ATP is bound by residues 21–29 and K44; that span reads IGEGSFGML. D134 functions as the Proton acceptor in the catalytic mechanism. Positions 366–426 are disordered; it reads DGIPGKAASP…PSKEKSRKKF (61 aa). Positions 372–413 are enriched in low complexity; that stretch reads AASPQVQQQQQTSSAQQQQPQRVEQPAPQTTQPTQVDTQQAA.

Belongs to the protein kinase superfamily. CK1 Ser/Thr protein kinase family. Casein kinase I subfamily.

It localises to the cytoplasm. The catalysed reaction is L-seryl-[protein] + ATP = O-phospho-L-seryl-[protein] + ADP + H(+). It carries out the reaction L-threonyl-[protein] + ATP = O-phospho-L-threonyl-[protein] + ADP + H(+). In terms of biological role, casein kinases are operationally defined by their preferential utilization of acidic proteins such as caseins as substrates. This is Casein kinase I homolog 3 (cki3) from Schizosaccharomyces pombe (strain 972 / ATCC 24843) (Fission yeast).